We begin with the raw amino-acid sequence, 946 residues long: Glycine dehydrogenase (decarboxylating) (946 aa).

An N6-(pyridoxal phosphate)lysine modification is found at Lys700.

It belongs to the GcvP family. In terms of assembly, the glycine cleavage system is composed of four proteins: P, T, L and H. The cofactor is pyridoxal 5'-phosphate.

It catalyses the reaction N(6)-[(R)-lipoyl]-L-lysyl-[glycine-cleavage complex H protein] + glycine + H(+) = N(6)-[(R)-S(8)-aminomethyldihydrolipoyl]-L-lysyl-[glycine-cleavage complex H protein] + CO2. In terms of biological role, the glycine cleavage system catalyzes the degradation of glycine. The P protein binds the alpha-amino group of glycine through its pyridoxal phosphate cofactor; CO(2) is released and the remaining methylamine moiety is then transferred to the lipoamide cofactor of the H protein. The polypeptide is Glycine dehydrogenase (decarboxylating) (Pseudomonas fluorescens (strain SBW25)).